Consider the following 100-residue polypeptide: Urease subunit gamma (100 aa).

Belongs to the urease gamma subunit family. Heterotrimer of UreA (gamma), UreB (beta) and UreC (alpha) subunits. Three heterotrimers associate to form the active enzyme.

The protein localises to the cytoplasm. It carries out the reaction urea + 2 H2O + H(+) = hydrogencarbonate + 2 NH4(+). The protein operates within nitrogen metabolism; urea degradation; CO(2) and NH(3) from urea (urease route): step 1/1. This is Urease subunit gamma from Pseudomonas syringae pv. tomato (strain ATCC BAA-871 / DC3000).